Reading from the N-terminus, the 283-residue chain is Shikimate dehydrogenase (NADP(+)) (283 aa).

Shikimate is bound by residues 19–21 (SRS) and T66. The Proton acceptor role is filled by K70. Residue E82 participates in NADP(+) binding. Residues N91 and D107 each coordinate shikimate. NADP(+) contacts are provided by residues 133 to 137 (GAGGA) and I226. Y228 lines the shikimate pocket. Position 249 (G249) interacts with NADP(+).

It belongs to the shikimate dehydrogenase family. Homodimer.

It catalyses the reaction shikimate + NADP(+) = 3-dehydroshikimate + NADPH + H(+). It participates in metabolic intermediate biosynthesis; chorismate biosynthesis; chorismate from D-erythrose 4-phosphate and phosphoenolpyruvate: step 4/7. Functionally, involved in the biosynthesis of the chorismate, which leads to the biosynthesis of aromatic amino acids. Catalyzes the reversible NADPH linked reduction of 3-dehydroshikimate (DHSA) to yield shikimate (SA). The chain is Shikimate dehydrogenase (NADP(+)) from Rhodospirillum rubrum (strain ATCC 11170 / ATH 1.1.1 / DSM 467 / LMG 4362 / NCIMB 8255 / S1).